The following is a 163-amino-acid chain: Transcription elongation factor GreA (163 aa).

Residues 11–38 (FKQLEKELDRLKKERPGVIQAIKEAREE) adopt a coiled-coil conformation.

The protein belongs to the GreA/GreB family.

In terms of biological role, necessary for efficient RNA polymerase transcription elongation past template-encoded arresting sites. The arresting sites in DNA have the property of trapping a certain fraction of elongating RNA polymerases that pass through, resulting in locked ternary complexes. Cleavage of the nascent transcript by cleavage factors such as GreA or GreB allows the resumption of elongation from the new 3'terminus. GreA releases sequences of 2 to 3 nucleotides. The polypeptide is Transcription elongation factor GreA (Nitratidesulfovibrio vulgaris (strain ATCC 29579 / DSM 644 / CCUG 34227 / NCIMB 8303 / VKM B-1760 / Hildenborough) (Desulfovibrio vulgaris)).